The sequence spans 479 residues: GTPase Der (479 aa).

2 consecutive EngA-type G domains span residues 3–166 (PVVA…AEEY) and 192–365 (LKLA…ASAT). GTP-binding positions include 9–16 (GRPNVGKS), 56–60 (DTGGI), 118–121 (NKID), 198–205 (GRPNVGKS), 245–249 (DTAGV), and 310–313 (NKWD). The KH-like domain maps to 366 to 450 (QRISTSKLTK…PIKVEFREPV (85 aa)).

It belongs to the TRAFAC class TrmE-Era-EngA-EngB-Septin-like GTPase superfamily. EngA (Der) GTPase family. As to quaternary structure, associates with the 50S ribosomal subunit.

Functionally, GTPase that plays an essential role in the late steps of ribosome biogenesis. This Idiomarina loihiensis (strain ATCC BAA-735 / DSM 15497 / L2-TR) protein is GTPase Der.